The chain runs to 59 residues: Large ribosomal subunit protein bL32 (59 aa).

Residues 1-25 form a disordered region; it reads MAVQQNKKSPSKRGMHRAHDFLTAP.

Belongs to the bacterial ribosomal protein bL32 family.

The chain is Large ribosomal subunit protein bL32 from Azoarcus sp. (strain BH72).